The chain runs to 330 residues: DNA primase small subunit PriS (330 aa).

Residues Asp-101 and Asp-103 contribute to the active site. Zn(2+) is bound by residues Cys-116, Cys-119, Cys-128, and Asp-131. Residue Asp-235 is part of the active site.

This sequence belongs to the eukaryotic-type primase small subunit family. Heterodimer of a small subunit (PriS) and a large subunit (PriL). Mg(2+) is required as a cofactor. It depends on Mn(2+) as a cofactor.

Its function is as follows. Catalytic subunit of DNA primase, an RNA polymerase that catalyzes the synthesis of short RNA molecules used as primers for DNA polymerase during DNA replication. The small subunit contains the primase catalytic core and has DNA synthesis activity on its own. Binding to the large subunit stabilizes and modulates the activity, increasing the rate of DNA synthesis while decreasing the length of the DNA fragments, and conferring RNA synthesis capability. The DNA polymerase activity may enable DNA primase to also catalyze primer extension after primer synthesis. May also play a role in DNA repair. The sequence is that of DNA primase small subunit PriS from Saccharolobus islandicus (strain Y.N.15.51 / Yellowstone #2) (Sulfolobus islandicus).